The sequence spans 227 residues: Cytochrome c oxidase subunit 2 (227 aa).

Over 1–14 the chain is Mitochondrial intermembrane; that stretch reads MAYPFQLGLQDATS. The helical transmembrane segment at 15 to 45 threads the bilayer; it reads PIMEELTNFHDHTLMIVFLISSLVLYIISLM. Topologically, residues 46–59 are mitochondrial matrix; that stretch reads LTTKLTHTSTMDAQ. A helical transmembrane segment spans residues 60 to 87; the sequence is EVETIWTILPAVILILIALPSLRILYMM. At 88–227 the chain is on the mitochondrial intermembrane side; the sequence is DEINNPALTV…HFENWSASMI (140 aa). His-161, Cys-196, Glu-198, Cys-200, His-204, and Met-207 together coordinate Cu cation. Glu-198 lines the Mg(2+) pocket.

It belongs to the cytochrome c oxidase subunit 2 family. As to quaternary structure, component of the cytochrome c oxidase (complex IV, CIV), a multisubunit enzyme composed of 14 subunits. The complex is composed of a catalytic core of 3 subunits MT-CO1, MT-CO2 and MT-CO3, encoded in the mitochondrial DNA, and 11 supernumerary subunits COX4I, COX5A, COX5B, COX6A, COX6B, COX6C, COX7A, COX7B, COX7C, COX8 and NDUFA4, which are encoded in the nuclear genome. The complex exists as a monomer or a dimer and forms supercomplexes (SCs) in the inner mitochondrial membrane with NADH-ubiquinone oxidoreductase (complex I, CI) and ubiquinol-cytochrome c oxidoreductase (cytochrome b-c1 complex, complex III, CIII), resulting in different assemblies (supercomplex SCI(1)III(2)IV(1) and megacomplex MCI(2)III(2)IV(2)). Found in a complex with TMEM177, COA6, COX18, COX20, SCO1 and SCO2. Interacts with TMEM177 in a COX20-dependent manner. Interacts with COX20. Interacts with COX16. It depends on Cu cation as a cofactor.

The protein resides in the mitochondrion inner membrane. The catalysed reaction is 4 Fe(II)-[cytochrome c] + O2 + 8 H(+)(in) = 4 Fe(III)-[cytochrome c] + 2 H2O + 4 H(+)(out). Functionally, component of the cytochrome c oxidase, the last enzyme in the mitochondrial electron transport chain which drives oxidative phosphorylation. The respiratory chain contains 3 multisubunit complexes succinate dehydrogenase (complex II, CII), ubiquinol-cytochrome c oxidoreductase (cytochrome b-c1 complex, complex III, CIII) and cytochrome c oxidase (complex IV, CIV), that cooperate to transfer electrons derived from NADH and succinate to molecular oxygen, creating an electrochemical gradient over the inner membrane that drives transmembrane transport and the ATP synthase. Cytochrome c oxidase is the component of the respiratory chain that catalyzes the reduction of oxygen to water. Electrons originating from reduced cytochrome c in the intermembrane space (IMS) are transferred via the dinuclear copper A center (CU(A)) of subunit 2 and heme A of subunit 1 to the active site in subunit 1, a binuclear center (BNC) formed by heme A3 and copper B (CU(B)). The BNC reduces molecular oxygen to 2 water molecules using 4 electrons from cytochrome c in the IMS and 4 protons from the mitochondrial matrix. This Berylmys bowersi (Bower's white-toothed rat) protein is Cytochrome c oxidase subunit 2 (MT-CO2).